The following is a 696-amino-acid chain: ATP-dependent zinc metalloprotease FtsH (696 aa).

Residues 1 to 29 (MWLQVTNCSTLHSSLSYCGANTLSDMAKN) are Cytoplasmic-facing. A helical transmembrane segment spans residues 30–50 (LILWLVIAVVLMSVFQSFGPS). The Periplasmic portion of the chain corresponds to 51–124 (DSAGRQVDYT…LGTPPEEPSL (74 aa)). A helical transmembrane segment spans residues 125 to 145 (LASIFISWFPMLLLIGVWVFF). The Cytoplasmic portion of the chain corresponds to 146-696 (MRQMQGGGGG…APKEDDKPQA (551 aa)). ATP is bound at residue 219 to 226 (GPPGTGKT). His441 contacts Zn(2+). The active site involves Glu442. Zn(2+)-binding residues include His445 and Asp519. The disordered stretch occupies residues 627 to 696 (RAPKGWGDTD…APKEDDKPQA (70 aa)). The segment covering 650–696 (PEAKTESAPEAKAEANVETEEKPVAADSEELKPKAEQAPKEDDKPQA) has biased composition (basic and acidic residues).

It in the central section; belongs to the AAA ATPase family. This sequence in the C-terminal section; belongs to the peptidase M41 family. As to quaternary structure, homohexamer. Zn(2+) is required as a cofactor.

It is found in the cell inner membrane. Its function is as follows. Acts as a processive, ATP-dependent zinc metallopeptidase for both cytoplasmic and membrane proteins. Plays a role in the quality control of integral membrane proteins. In Photobacterium profundum (strain SS9), this protein is ATP-dependent zinc metalloprotease FtsH.